A 292-amino-acid chain; its full sequence is Elongation factor Ts (292 aa).

The segment at 79–82 (TDFV) is involved in Mg(2+) ion dislocation from EF-Tu.

Belongs to the EF-Ts family.

Its subcellular location is the cytoplasm. In terms of biological role, associates with the EF-Tu.GDP complex and induces the exchange of GDP to GTP. It remains bound to the aminoacyl-tRNA.EF-Tu.GTP complex up to the GTP hydrolysis stage on the ribosome. The polypeptide is Elongation factor Ts (Staphylococcus haemolyticus (strain JCSC1435)).